The sequence spans 55 residues: ATP synthase F(0) complex subunit 8 (55 aa).

Residues 10-30 (FPIMMLSWLIFSLIIQPKLLL) traverse the membrane as a helical segment. A disordered region spans residues 35–55 (NPPSNKTTTTTRSNPWTWPWT). Positions 37–55 (PSNKTTTTTRSNPWTWPWT) are enriched in low complexity.

This sequence belongs to the ATPase protein 8 family. As to quaternary structure, component of the ATP synthase complex composed at least of ATP5F1A/subunit alpha, ATP5F1B/subunit beta, ATP5MC1/subunit c (homooctomer), MT-ATP6/subunit a, MT-ATP8/subunit 8, ATP5ME/subunit e, ATP5MF/subunit f, ATP5MG/subunit g, ATP5MK/subunit k, ATP5MJ/subunit j, ATP5F1C/subunit gamma, ATP5F1D/subunit delta, ATP5F1E/subunit epsilon, ATP5PF/subunit F6, ATP5PB/subunit b, ATP5PD/subunit d, ATP5PO/subunit OSCP. ATP synthase complex consists of a soluble F(1) head domain (subunits alpha(3) and beta(3)) - the catalytic core - and a membrane F(0) domain - the membrane proton channel (subunits c, a, 8, e, f, g, k and j). These two domains are linked by a central stalk (subunits gamma, delta, and epsilon) rotating inside the F1 region and a stationary peripheral stalk (subunits F6, b, d, and OSCP).

The protein localises to the mitochondrion membrane. Functionally, subunit 8, of the mitochondrial membrane ATP synthase complex (F(1)F(0) ATP synthase or Complex V) that produces ATP from ADP in the presence of a proton gradient across the membrane which is generated by electron transport complexes of the respiratory chain. ATP synthase complex consist of a soluble F(1) head domain - the catalytic core - and a membrane F(1) domain - the membrane proton channel. These two domains are linked by a central stalk rotating inside the F(1) region and a stationary peripheral stalk. During catalysis, ATP synthesis in the catalytic domain of F(1) is coupled via a rotary mechanism of the central stalk subunits to proton translocation. In vivo, can only synthesize ATP although its ATP hydrolase activity can be activated artificially in vitro. Part of the complex F(0) domain. This chain is ATP synthase F(0) complex subunit 8, found in Opisthocomus hoazin (Hoatzin).